The primary structure comprises 82 residues: Small ribosomal subunit protein bS18 (82 aa).

It belongs to the bacterial ribosomal protein bS18 family. As to quaternary structure, part of the 30S ribosomal subunit. Forms a tight heterodimer with protein bS6.

In terms of biological role, binds as a heterodimer with protein bS6 to the central domain of the 16S rRNA, where it helps stabilize the platform of the 30S subunit. The polypeptide is Small ribosomal subunit protein bS18 (Rhizobium rhizogenes (strain K84 / ATCC BAA-868) (Agrobacterium radiobacter)).